Here is a 162-residue protein sequence, read N- to C-terminus: SCF ubiquitin ligase complex protein SKP1a (162 aa).

S2 carries the post-translational modification N-acetylserine. The segment at I100–N162 is interaction with the F-box domain of F-box proteins. P143 is subject to 4-hydroxyproline. Residue P143 is glycosylated (O-linked (GlcNAc...) hydroxyproline).

Belongs to the SKP1 family. Multiprotein complex (SCF) with cullin and F-box-containing protein. Capable of undergoing aggregation. O-linked glycan consists of linear Gal-Gal-Fuc-Gal-GlcNAc. In terms of processing, fpaA and fpaB seem to be identically glycosylated. Glycosylation is required for nuclear enrichment. Post-translationally, hydroxylated by phyA.

The protein localises to the cytoplasm. It is found in the nucleus. This is SCF ubiquitin ligase complex protein SKP1a (fpaA) from Dictyostelium discoideum (Social amoeba).